The chain runs to 179 residues: Cytochrome b6-f complex iron-sulfur subunit (179 aa).

Residues 21–43 (LLTFGTVTGVALGALYPVVNYFI) form a helical membrane-spanning segment. The 102-residue stretch at 61–162 (GNDVSVTKFL…TNVSDDKIVL (102 aa)) folds into the Rieske domain. Positions 108, 110, 126, and 129 each coordinate [2Fe-2S] cluster. C113 and C128 are joined by a disulfide.

This sequence belongs to the Rieske iron-sulfur protein family. As to quaternary structure, the 4 large subunits of the cytochrome b6-f complex are cytochrome b6, subunit IV (17 kDa polypeptide, PetD), cytochrome f and the Rieske protein, while the 4 small subunits are PetG, PetL, PetM and PetN. The complex functions as a dimer. [2Fe-2S] cluster is required as a cofactor.

The protein localises to the cellular thylakoid membrane. It carries out the reaction 2 oxidized [plastocyanin] + a plastoquinol + 2 H(+)(in) = 2 reduced [plastocyanin] + a plastoquinone + 4 H(+)(out). Functionally, component of the cytochrome b6-f complex, which mediates electron transfer between photosystem II (PSII) and photosystem I (PSI), cyclic electron flow around PSI, and state transitions. The polypeptide is Cytochrome b6-f complex iron-sulfur subunit (Nostoc punctiforme (strain ATCC 29133 / PCC 73102)).